The chain runs to 355 residues: 3-isopropylmalate dehydrogenase (355 aa).

Substrate-binding residues include Arg90, Arg100, Arg128, and Asp222. Mg(2+)-binding residues include Asp222, Asp246, and Asp250. NAD(+) is bound at residue 280–292 (GSAPDIAGKGIAN).

This sequence belongs to the isocitrate and isopropylmalate dehydrogenases family. LeuB type 1 subfamily. As to quaternary structure, homodimer. Mg(2+) is required as a cofactor. Requires Mn(2+) as cofactor.

The protein localises to the cytoplasm. The enzyme catalyses (2R,3S)-3-isopropylmalate + NAD(+) = 4-methyl-2-oxopentanoate + CO2 + NADH. It participates in amino-acid biosynthesis; L-leucine biosynthesis; L-leucine from 3-methyl-2-oxobutanoate: step 3/4. Its function is as follows. Catalyzes the oxidation of 3-carboxy-2-hydroxy-4-methylpentanoate (3-isopropylmalate) to 3-carboxy-4-methyl-2-oxopentanoate. The product decarboxylates to 4-methyl-2 oxopentanoate. The polypeptide is 3-isopropylmalate dehydrogenase (Burkholderia thailandensis (strain ATCC 700388 / DSM 13276 / CCUG 48851 / CIP 106301 / E264)).